Here is a 267-residue protein sequence, read N- to C-terminus: Hydroxyethylthiazole kinase (267 aa).

Residue Met48 coordinates substrate. Arg124 and Ser170 together coordinate ATP. Gly197 is a binding site for substrate.

This sequence belongs to the Thz kinase family. Mg(2+) serves as cofactor.

The catalysed reaction is 5-(2-hydroxyethyl)-4-methylthiazole + ATP = 4-methyl-5-(2-phosphooxyethyl)-thiazole + ADP + H(+). The protein operates within cofactor biosynthesis; thiamine diphosphate biosynthesis; 4-methyl-5-(2-phosphoethyl)-thiazole from 5-(2-hydroxyethyl)-4-methylthiazole: step 1/1. Its function is as follows. Catalyzes the phosphorylation of the hydroxyl group of 4-methyl-5-beta-hydroxyethylthiazole (THZ). This Leptospira biflexa serovar Patoc (strain Patoc 1 / Ames) protein is Hydroxyethylthiazole kinase.